Consider the following 367-residue polypeptide: 1-deoxy-D-xylulose 5-phosphate reductoisomerase (367 aa).

NADPH-binding residues include threonine 10, glycine 11, serine 12, isoleucine 13, glycine 34, lysine 35, asparagine 36, and asparagine 112. Lysine 113 provides a ligand contact to 1-deoxy-D-xylulose 5-phosphate. An NADPH-binding site is contributed by glutamate 114. Position 138 (aspartate 138) interacts with Mn(2+). 1-deoxy-D-xylulose 5-phosphate is bound by residues serine 139, glutamate 140, serine 164, and histidine 186. Position 140 (glutamate 140) interacts with Mn(2+). Glycine 192 is a binding site for NADPH. Residues serine 199, asparagine 204, lysine 205, and glutamate 208 each contribute to the 1-deoxy-D-xylulose 5-phosphate site. Glutamate 208 provides a ligand contact to Mn(2+).

The protein belongs to the DXR family. The cofactor is Mg(2+). Requires Mn(2+) as cofactor.

It carries out the reaction 2-C-methyl-D-erythritol 4-phosphate + NADP(+) = 1-deoxy-D-xylulose 5-phosphate + NADPH + H(+). Its pathway is isoprenoid biosynthesis; isopentenyl diphosphate biosynthesis via DXP pathway; isopentenyl diphosphate from 1-deoxy-D-xylulose 5-phosphate: step 1/6. Its function is as follows. Catalyzes the NADPH-dependent rearrangement and reduction of 1-deoxy-D-xylulose-5-phosphate (DXP) to 2-C-methyl-D-erythritol 4-phosphate (MEP). The protein is 1-deoxy-D-xylulose 5-phosphate reductoisomerase of Thermus thermophilus (strain ATCC BAA-163 / DSM 7039 / HB27).